The primary structure comprises 397 residues: Elongation factor Tu (397 aa).

In terms of domain architecture, tr-type G spans K10–E206. Positions G19–T26 are G1. Position 19–26 (G19–T26) interacts with GTP. Residue T26 coordinates Mg(2+). Residues G62–S66 form a G2 region. The interval D83 to G86 is G3. Residues D83–H87 and N138–D141 each bind GTP. A G4 region spans residues N138–D141. The segment at S176–L178 is G5.

This sequence belongs to the TRAFAC class translation factor GTPase superfamily. Classic translation factor GTPase family. EF-Tu/EF-1A subfamily. In terms of assembly, monomer.

It localises to the cytoplasm. The enzyme catalyses GTP + H2O = GDP + phosphate + H(+). Functionally, GTP hydrolase that promotes the GTP-dependent binding of aminoacyl-tRNA to the A-site of ribosomes during protein biosynthesis. This Streptomyces cinnamoneus (Streptoverticillium cinnamoneum) protein is Elongation factor Tu.